The following is a 142-amino-acid chain: Protein archease (142 aa).

Ca(2+) contacts are provided by aspartate 12, aspartate 141, and isoleucine 142.

This sequence belongs to the archease family.

Its function is as follows. Activates the tRNA-splicing ligase complex by facilitating the enzymatic turnover of catalytic subunit RtcB. Acts by promoting the guanylylation of RtcB, a key intermediate step in tRNA ligation. Can also alter the NTP specificity of RtcB such that ATP, dGTP or ITP is used efficiently. The sequence is that of Protein archease from Pyrococcus furiosus (strain ATCC 43587 / DSM 3638 / JCM 8422 / Vc1).